A 305-amino-acid polypeptide reads, in one-letter code: uncharacterized protein (305 aa).

A helical membrane pass occupies residues Ile-8 to Phe-28.

The protein resides in the membrane. This is an uncharacterized protein from Bacillus subtilis (strain 168).